The following is a 536-amino-acid chain: MSSPNLAHPPTDYTGIVLFPRELSQFFMGDAGETLLINGAPGTGKTLFTIRGLDVLDRDSDVLYVSTRVDQETVHEMYFADHSSLDTTAILDLFQDPFELPLDVDVPFEKLDLDSLLEWIQEINAATTQLTIAFDSWELIYEYLAVRHDDPPDIKTVTNQLAVLAREENIRLMLVTETAAPSSLEYIVDGVVTLQVKEDDRGRTRRDLRLDKLRGVRIGNRLQPFTLADGQFQVITPVELLTIQTGTGNGTWDPLANSKAKFSTGIRDLDRILSGGYNRGSVVHLDLGPDLSRDAWSVLTLPTIRNFLSQEMGVAVVPPREGSPGLLHNDLNTVLSSQVFDTYCHVFETYAGPSDSADRYDQPDSTESFSEMATTTPPDDAPTATHETDGADDGSRSTDGVTGSDQPHPIDEDFESPIEGGQLAYEPYMAYVEQVREESEDPLLHVISMDTAQEAFETRLGDFANYVALHNDLTLLITKQGTELRTRADRVADMHFRLERSGDAIILYGENPLTPLLGIGISQSESIPKITLTEMV.

Residue 39-46 (GAPGTGKT) coordinates ATP. The disordered stretch occupies residues 352 to 413 (GPSDSADRYD…SDQPHPIDED (62 aa)). The segment covering 363–372 (PDSTESFSEM) has biased composition (polar residues). Positions 373–385 (ATTTPPDDAPTAT) are enriched in low complexity. Over residues 386 to 396 (HETDGADDGSR) the composition is skewed to basic and acidic residues.

It belongs to the gas vesicle GvpD family. Interacts with GvpE.

Its subcellular location is the cytoplasm. In terms of biological role, causes a decrease in the amount of GvpE protein. The 5'-region of its promoter or mRNA has a repressive function on downstream genes. Gas vesicles are hollow, gas filled proteinaceous nanostructures found in several microbial planktonic microorganisms. They allow positioning of halobacteria at the optimal depth for growth in the poorly aerated, shallow brine pools of their habitat. Functionally, expression of a 9.5 kb p-vac DNA fragment containing 2 divergently transcribed regions (gvpD-gvpE-gvpF-gvpG-gvpH-gvpI-gvpJ-gvpK-gvpL-gvpM and gvpA-gvpC-gvpN-gvpO) allows H.volcanii to produce gas vesicles. A similar region restores gas vesicle production in H.halobium without the p-vac locus, but it still has the c-vac locus. This chain is Protein GvpD1 (gvpD11), found in Halobacterium salinarum (strain ATCC 700922 / JCM 11081 / NRC-1) (Halobacterium halobium).